The sequence spans 302 residues: Serine/threonine-protein phosphatase alpha-2 isoform (302 aa).

Residues Asp-62, His-64, Asp-90, and Asn-122 each coordinate Mn(2+). The active-site Proton donor is the His-123. Mn(2+) is bound by residues His-171 and His-246.

The protein belongs to the PPP phosphatase family. PP-1 subfamily. In terms of assembly, interacts with Nop17l. Interacts with uri; uri inhibits Pp1-87B phosphatase activity. Interacts with Rif1. It depends on Mn(2+) as a cofactor.

Its subcellular location is the cytoplasm. The catalysed reaction is O-phospho-L-seryl-[protein] + H2O = L-seryl-[protein] + phosphate. It carries out the reaction O-phospho-L-threonyl-[protein] + H2O = L-threonyl-[protein] + phosphate. Is essential for the regulation of mitotic chromosomal segregation as well as regulation of chromatin condensation during interphase. The polypeptide is Serine/threonine-protein phosphatase alpha-2 isoform (Pp1-87B) (Drosophila melanogaster (Fruit fly)).